Consider the following 92-residue polypeptide: uncharacterized protein (92 aa).

Residues 1–10 (MGLLKKKDST) are compositionally biased toward basic and acidic residues. A disordered region spans residues 1 to 21 (MGLLKKKDSTSARSSTSPCAD). The CHCH domain maps to 16–66 (TSPCADLRNAYHNCFNKWYSEKFVKGQWDKEECVAEWKKYRDCLSENLDGK). Short sequence motifs (cx9C motif) lie at residues 19-29 (CADLRNAYHNC) and 48-58 (CVAEWKKYRDC). 2 cysteine pairs are disulfide-bonded: Cys-19–Cys-58 and Cys-29–Cys-48.

Belongs to the TRIAP1/MDM35 family.

This is an uncharacterized protein from Arabidopsis thaliana (Mouse-ear cress).